The chain runs to 3567 residues: METCDSPPISRQENGQSTSKLCGTTQLDNEVPEKVAGMEPDRENSSTDDNLKTDERKSEALLGFSVENAAATQVTSAKEIPCNECATSFPSLQKYMEHHCPNARLPVLKDDNESEISELEDSDVENLTGEIVYQPDGSAYIIEDSKESGQNAQTGANSKLFSTAMFLDSLASAGEKSDQSASAPMSFYPQIINTFHIASSLGKPFTADQAFPNTSALAGVGPVLHSFRVYDLRHKREKDYLTSDGSAKNSCVSKDVPNNVDLSKFDGCVSDGKRKPVLMCFLCKLSFGYIRSFVTHAVHDHRMTLNDEEQKLLSNKCVSAIIQGIGKDKEPLISFLEPKKSTSVYPHFSTTNLIGPDPTFRGLWSAFHVENGDSLPAGFAFLKGSASTSSSAEQPLGITQMPKAEVNLGGLSSLVVNTPITSVSLSHSSSESSKMSESKDQENNCERPKESNVLHPNGECPVKSEPTEPGDEDEEDAYSNELDDEEVLGELTDSIGNKDFPLLNQSISPLSSSVLKFIEKGTSSSSATVSDDTEKKKQTAAVRASGSVASNYGISGKDFADASASKDSATAAHPSEIARGDEDSSATPHQHGFTPSTPGTPGPGGDGSPGSGIECPKCDTVLGSSRSLGGHMTMMHSRNSCKTLKCPKCNWHYKYQQTLEAHMKEKHPEPGGSCVYCKTGQPHPRLARGESYTCGYKPFRCEVCNYSTTTKGNLSIHMQSDKHLNNVQNLQNGNGEQVFGHSAPAPNTSLSGCGTPSPSKPKQKPTWRCEVCDYETNVARNLRIHMTSEKHMHNMMLLQQNMKQIQHNLHLGLAPAEAELYQYYLAQNIGLTGMKLENPADPQLMINPFQLDPATAAALAPGLGELSPYISDPALKLFQCAVCNKFTSDSLEALSVHVSSERSLPEEEWRAVIGDIYQCKLCNYNTQLKANFQLHCKTDKHMQKYQLVAHIKEGGKSNEWRLKCIAIGNPVHLKCNACDYYTNSVDKLRLHTTNHRHEAALKLYKHLQKQEGAVNPESCYYYCAVCDYTTKVKLNLVQHVRSVKHQQTEGLRKLQLHQQGLAPEEDNLSEIFFVKDCPPNELETASLGARTCDDDLTEQHEEAEGAIKPTAVAEDDEKDTSERDNSEGKNSNKDSVSVAGGTQPLLLAKEEDVATKRSKPTEDNKFCHEQFYQCPYCNYNSRDQSRIQMHVLSQHSVQPVICCPLCQDVLSNKMHLQLHLTHLHSVSPDCVEKLLMTVPVPDVMMPNSMLLPAAASEKSERDTPAAVTAEGSGKYSGESPMDDKSMAGLEDSKANVEVKNEEQKPTKEPLEVSEWNKNSSKDVKIPDTLQDQLNEQQKRQPLSVSDRHVYKYRCNHCSLAFKTMQKLQIHSQYHAIRAATMCNLCQRSFRTFQALKKHLEAGHPELSEAELQQLYASLPVNGELWAESETMSQDDHGLEQEMEREYEVDHEGKASPVGSDSSSIPDDMGSEPKRTLPFRKGPNFTMEKFLDPSRPYKCTVCKESFTQKNILLVHYNSVSHLHKLKKVLQEASSPVPQETNSNTDNKPYKCSICNVAYSQSSTLEIHMRSVLHQTKARAAKLEPSGHVAGGHSIAANVNSPGQGMLDSMSLAAVNSKDTHLDAKELNKKQTPDLISAQPAHHPPQSPAQIQMQLQHELQQQAAFFQPQFLNPAFLPHFPMTPEALLQFQQPQFLFPFYIPGTEFSLGPDLGLPGSATFGMPGMTGMAGSLLEDLKQQIQTQHHVGQTQLQILQQQAQQYQATQPQLQPQKQQQQPPPPQQQQQQQASKLLKQEQSNIVSADCQIMKDVPSYKEAEDISEKPEKPKQEFISEGEGLKEGKDTKKQKSLEPSIPPPRIASGARGNAAKALLENFGFELVIQYNENRQKVQKKGKSGEGENTDKLECGTCGKLFSNVLILKSHQEHVHGQFFPYAALEKFARQYREAYDKLYPISPSSPETPPPPPPPPPLPPAPPQPSSMGPVKIPNTVSTPLQAPPPTPPPPPPPPPPPPPPPPPPPPSAPPQVQLPVSLDLPLFPSIMMQPVQHPALPPQLALQLPQMDALSADLTQLCQQQLGLDPNFLRHSQFKRPRTRITDDQLKILRAYFDINNSPSEEQIQEMAEKSGLSQKVIKHWFRNTLFKERQRNKDSPYNFSNPPITVLEDIRIDPQPTSLEHYKSDASFSKRSSRTRFTDYQLRVLQDFFDTNAYPKDDEIEQLSTVLNLPTRVIVVWFQNARQKARKSYENQAETKDNEKRELTNERYIRTSNMQYQCKKCNVVFPRIFDLITHQKKQCYKDEDDDAQDESQTEDSMDATDQVVYKHCTVSGQTDAAKNAAAPAASSGSGTSTPLIPSPKPEPEKTSPKPEYPAEKPKQSDPSPPSQGTKPALPLASTSSDPPQASTAQPQPQPQPPKQPQLIGRPPSASQTPVPSSPLQISMTSLQNSLPPQLLQYQCDQCTVAFPTLELWQEHQHMHFLAAQNQFLHSPFLERPMDMPYMIFDPNNPLMTGQLLGSSLTQMPPQASSSHTTAPTTVAASLKRKLDDKEDNNCSEKEGGNSGEDQHRDKRLRTTITPEQLEILYEKYLLDSNPTRKMLDHIAREVGLKKRVVQVWFQNTRARERKGQFRAVGPAQSHKRCPFCRALFKAKSALESHIRSRHWNEGKQAGYSLPPSPLISTEDGGESPQKYIYFDYPSLPLTKIDLSSENELASTVSTPVSKTAELSPKNLLSPSSFKAECSEDVENLNAPPAEAGYDQNKTDFDETSSINTAISDATTGDEGNTEMESTTGSSGDVKPALSPKEPKTLDTLPKPATTPTTEVCDDKFLFSLTSPSIHFNDKDGDHDQSFYITDDPDDNADRSETSSIADPSSPNPFGSSNPFKSKSNDRPGHKRFRTQMSNLQLKVLKACFSDYRTPTMQECEMLGNEIGLPKRVVQVWFQNARAKEKKFKINIGKPFMINQGGTEGTKPECTLCGVKYSARLSIRDHIFSKQHISKVRETVGSQLDREKDYLAPTTVRQLMAQQELDRIKKASDVLGLTVQQPGMMDSSSLHGISLPTAYPGLPGLPPVLLPGMNGPSSLPGFPQNSNISAGMLGFPTSATSSPALSLSSAPTKPLLQTPPPPPPPPPPPPSSSLSGQQTEQQNKESEKKQTKPNKVKKIKEEELEATKPEKHPKKEEKISSALSVLGKVVGETHVDPIQLQALQNAIAGDPASFIGGQFLPYFIPGFASYFTPQLPGTVQGGYFPPVCGMESLFPYGPTMPQTLAGLSPGALLQQYQQYQQNLQESLQKQQKQQQEQQQKPVQAKTSKVESDQPQNSNDASETKEDKSTATESTKEEPQLESKSADFSDTYVVPFVKYEFICRKCQMMFTDEDAAVNHQKSFCYFGQPLIDPQETVLRVPVSKYQCLACDVAISGNEALSQHLQSSLHKEKTIKQAMRNAKEHVRLLPHSVCSPNPNTTSTSQSAASSNNTYPHLSCFSMKSWPNILFQASARRAASPPSSPPSLSLPSTVTSSLCSTSGVQTSLPTESCSDESDSELSQKLEDLDNSLEVKAKPASGLDGNFNSIRMDMFSV.

Met1 is modified (N-acetylmethionine). Disordered regions lie at residues 1–54 (METC…LKTD), 425–480 (LSHS…AYSN), 522–545 (TSSSSATVSDDTEKKKQTAAVRAS), and 565–611 (SKDS…SPGS). A compositionally biased stretch (polar residues) spans 9 to 28 (ISRQENGQSTSKLCGTTQLD). Composition is skewed to basic and acidic residues over residues 39–54 (EPDRENSSTDDNLKTD) and 434–452 (KMSESKDQENNCERPKESN). A compositionally biased stretch (acidic residues) spans 468–480 (EPGDEDEEDAYSN). 3 C2H2-type zinc fingers span residues 613 to 636 (IECPKCDTVLGSSRSLGGHMTMMH), 644 to 667 (LKCPKCNWHYKYQQTLEAHMKEKH), and 699 to 723 (FRCEVCNYSTTTKGNLSIHMQSDKH). A C2H2-type 4; degenerate zinc finger spans residues 767–789 (WRCEVCDYETNVARNLRIHMTSE). 3 C2H2-type zinc fingers span residues 917–941 (YQCKLCNYNTQLKANFQLHCKTDKH), 973–995 (LKCNACDYYTNSVDKLRLHTTNH), and 1021–1045 (YYCAVCDYTTKVKLNLVQHVRSVKH). The tract at residues 1098–1160 (EQHEEAEGAI…EDVATKRSKP (63 aa)) is disordered. 2 stretches are compositionally biased toward basic and acidic residues: residues 1120 to 1132 (TSERDNSEGKNSN) and 1148 to 1160 (AKEEDVATKRSKP). A Glycyl lysine isopeptide (Lys-Gly) (interchain with G-Cter in SUMO2) cross-link involves residue Lys1149. 2 C2H2-type zinc fingers span residues 1172-1195 (YQCPYCNYNSRDQSRIQMHVLSQH) and 1201-1224 (ICCPLCQDVLSNKMHLQLHLTHLH). Residues 1254 to 1324 (AASEKSERDT…WNKNSSKDVK (71 aa)) form a disordered region. The span at 1281-1310 (MDDKSMAGLEDSKANVEVKNEEQKPTKEPL) shows a compositional bias: basic and acidic residues. Glycyl lysine isopeptide (Lys-Gly) (interchain with G-Cter in SUMO2) cross-links involve residues Lys1299 and Lys1324. 2 consecutive C2H2-type zinc fingers follow at residues 1352-1374 (YRCNHCSLAFKTMQKLQIHSQYH) and 1380-1403 (TMCNLCQRSFRTFQALKKHLEAGH). The disordered stretch occupies residues 1429-1480 (ETMSQDDHGLEQEMEREYEVDHEGKASPVGSDSSSIPDDMGSEPKRTLPFRK). Basic and acidic residues predominate over residues 1433 to 1453 (QDDHGLEQEMEREYEVDHEGK). A C2H2-type 12 zinc finger spans residues 1496-1522 (YKCTVCKESFTQKNILLVHYNSVSHLH). Lys1546 is covalently cross-linked (Glycyl lysine isopeptide (Lys-Gly) (interchain with G-Cter in SUMO2)). Residues 1548 to 1572 (YKCSICNVAYSQSSTLEIHMRSVLH) form a C2H2-type 13 zinc finger. Low complexity-rich tracts occupy residues 1761 to 1772 (TQPQLQPQKQQQ) and 1779 to 1791 (QQQQQQASKLLKQ). Disordered stretches follow at residues 1761 to 1791 (TQPQLQPQKQQQQPPPPQQQQQQQASKLLKQ) and 1809 to 1858 (SYKE…IASG). A Glycyl lysine isopeptide (Lys-Gly) (interchain with G-Cter in SUMO2) cross-link involves residue Lys1790. The segment covering 1809 to 1845 (SYKEAEDISEKPEKPKQEFISEGEGLKEGKDTKKQKS) has biased composition (basic and acidic residues). Residues 1901–1924 (LECGTCGKLFSNVLILKSHQEHVH) form a C2H2-type 14 zinc finger. Residues 1948 to 2024 (YPISPSSPET…PPSAPPQVQL (77 aa)) are disordered. 2 stretches are compositionally biased toward pro residues: residues 1955 to 1974 (PETPPPPPPPPPLPPAPPQP) and 1991 to 2019 (QAPPPTPPPPPPPPPPPPPPPPPPPPSAP). 2 consecutive DNA-binding regions (homeobox) follow at residues 2084–2143 (FKRP…RQRN) and 2181–2240 (KRSS…RKSY). A C2H2-type 15; degenerate zinc finger spans residues 2267 to 2291 (YQCKKCNVVFPRIFDLITHQKKQCY). Disordered regions lie at residues 2289 to 2311 (QCYKDEDDDAQDESQTEDSMDAT) and 2328 to 2431 (AKNA…SPLQ). Residues 2293-2309 (DEDDDAQDESQTEDSMD) show a composition bias toward acidic residues. Positions 2331-2345 (AAAPAASSGSGTSTP) are enriched in low complexity. A compositionally biased stretch (basic and acidic residues) spans 2352-2370 (PEPEKTSPKPEYPAEKPKQ). The span at 2419–2431 (SASQTPVPSSPLQ) shows a compositional bias: polar residues. The segment at 2448 to 2470 (YQCDQCTVAFPTLELWQEHQHMH) adopts a C2H2-type 16 zinc-finger fold. Residues 2507–2530 (LGSSLTQMPPQASSSHTTAPTTVA) show a composition bias toward polar residues. The segment at 2507–2564 (LGSSLTQMPPQASSSHTTAPTTVAASLKRKLDDKEDNNCSEKEGGNSGEDQHRDKRLR) is disordered. Basic and acidic residues predominate over residues 2535 to 2559 (RKLDDKEDNNCSEKEGGNSGEDQHR). The homeobox 3 DNA-binding region spans 2560 to 2619 (DKRLRTTITPEQLEILYEKYLLDSNPTRKMLDHIAREVGLKKRVVQVWFQNTRARERKGQ). The segment at 2630-2653 (KRCPFCRALFKAKSALESHIRSRH) adopts a C2H2-type 17 zinc-finger fold. Position 2663 is a phosphoserine (Ser2663). Residues 2764–2785 (AISDATTGDEGNTEMESTTGSS) show a composition bias toward polar residues. Disordered stretches follow at residues 2764–2811 (AISD…TTPT) and 2829–2885 (HFND…PGHK). Over residues 2830–2839 (FNDKDGDHDQ) the composition is skewed to basic and acidic residues. Residues 2862 to 2874 (PSSPNPFGSSNPF) show a composition bias toward low complexity. Residues 2884–2943 (HKRFRTQMSNLQLKVLKACFSDYRTPTMQECEMLGNEIGLPKRVVQVWFQNARAKEKKFK) constitute a DNA-binding region (homeobox 4). The C2H2-type 18 zinc-finger motif lies at 2962–2986 (PECTLCGVKYSARLSIRDHIFSKQH). Residues 3092-3110 (SATSSPALSLSSAPTKPLL) are compositionally biased toward low complexity. Disordered regions lie at residues 3092-3172 (SATS…KEEK) and 3281-3337 (LQKQ…LESK). A compositionally biased stretch (pro residues) spans 3111–3125 (QTPPPPPPPPPPPPS). A compositionally biased stretch (polar residues) spans 3126 to 3135 (SSLSGQQTEQ). Over residues 3153–3172 (IKEEELEATKPEKHPKKEEK) the composition is skewed to basic and acidic residues. Lys3154 is covalently cross-linked (Glycyl lysine isopeptide (Lys-Gly) (interchain with G-Cter in SUMO2)). Residues 3265–3294 (ALLQQYQQYQQNLQESLQKQQKQQQEQQQK) are a coiled coil. A compositionally biased stretch (low complexity) spans 3281 to 3293 (LQKQQKQQQEQQQ). Polar residues predominate over residues 3294–3314 (KPVQAKTSKVESDQPQNSNDA). The segment covering 3315–3337 (SETKEDKSTATESTKEEPQLESK) has biased composition (basic and acidic residues). The segment at 3354–3378 (FICRKCQMMFTDEDAAVNHQKSFCY) adopts a C2H2-type 19; degenerate zinc-finger fold. A C2H2-type 20 zinc finger spans residues 3398 to 3422 (YQCLACDVAISGNEALSQHLQSSLH). Disordered regions lie at residues 3443-3462 (HSVCSPNPNTTSTSQSAASS) and 3511-3534 (STSGVQTSLPTESCSDESDSELSQ). Positions 3447 to 3462 (SPNPNTTSTSQSAASS) are enriched in low complexity.

This sequence belongs to the krueppel C2H2-type zinc-finger protein family. In terms of tissue distribution, expressed in brain, skeletal muscle and liver. Very low expression in stomach.

Its subcellular location is the nucleus. Functionally, may play a role in neural and muscle differentiation. May be involved in transcriptional regulation. The sequence is that of Zinc finger homeobox protein 4 (ZFHX4) from Homo sapiens (Human).